Consider the following 137-residue polypeptide: ATP synthase epsilon chain, chloroplastic (137 aa).

It belongs to the ATPase epsilon chain family. F-type ATPases have 2 components, CF(1) - the catalytic core - and CF(0) - the membrane proton channel. CF(1) has five subunits: alpha(3), beta(3), gamma(1), delta(1), epsilon(1). CF(0) has three main subunits: a, b and c.

It localises to the plastid. The protein resides in the chloroplast thylakoid membrane. Produces ATP from ADP in the presence of a proton gradient across the membrane. This Oryza nivara (Indian wild rice) protein is ATP synthase epsilon chain, chloroplastic.